The primary structure comprises 559 residues: Potassium-transporting ATPase potassium-binding subunit (559 aa).

Helical transmembrane passes span Leu7–Leu27, Leu63–Trp83, Gly132–Ile152, Leu170–Ile190, Met253–Ala273, Leu283–Val303, Phe327–Val347, Ala356–Val376, Gly379–Gly399, Met416–Met436, Leu484–Ala504, and Gly524–Ile544.

It belongs to the KdpA family. In terms of assembly, the system is composed of three essential subunits: KdpA, KdpB and KdpC.

Its subcellular location is the cell inner membrane. Part of the high-affinity ATP-driven potassium transport (or Kdp) system, which catalyzes the hydrolysis of ATP coupled with the electrogenic transport of potassium into the cytoplasm. This subunit binds the periplasmic potassium ions and delivers the ions to the membrane domain of KdpB through an intramembrane tunnel. This chain is Potassium-transporting ATPase potassium-binding subunit, found in Salmonella arizonae (strain ATCC BAA-731 / CDC346-86 / RSK2980).